We begin with the raw amino-acid sequence, 238 residues long: uncharacterized protein (238 aa).

7 helical membrane-spanning segments follow: residues 22–42, 49–69, 78–98, 105–125, 141–161, 166–186, and 208–228; these read VYGW…GLYA, LFSL…YIQA, AVMG…GTMV, FGGG…GLSA, ILML…VVSL, PLMY…LTVV, and LSLI…WYLL.

It belongs to the BI1 family.

The protein resides in the cell membrane. This is an uncharacterized protein from Chlamydia muridarum (strain MoPn / Nigg).